The primary structure comprises 424 residues: Putative chloroquine resistance transporter (424 aa).

Topologically, residues 1 to 57 are cytoplasmic; that stretch reads MKILKKKKKGNQQIVPDERYRELDSHAPNENEIADEAPMSRKILYYLKLVYHEIREN. A helical membrane pass occupies residues 58–78; sequence ITIYLLIILYLCVCVMNKIMA. Residues 79 to 89 lie on the Vacuolar side of the membrane; the sequence is KRTLKKIGNYS. An N-linked (GlcNAc...) asparagine glycan is attached at Asn-87. Residues 90 to 110 form a helical membrane-spanning segment; that stretch reads FVTSETHNTICMVVFFSLYFI. Over 111 to 124 the chain is Cytoplasmic; that stretch reads FGRRVTSAKERHQN. The helical transmembrane segment at 125–145 threads the bilayer; that stretch reads FGLQFLLISLLDACSVIIAFI. Residues 146–153 lie on the Vacuolar side of the membrane; sequence GLTRTTGN. Residues 154-174 form a helical membrane-spanning segment; the sequence is IQSFVMQLSIPINMFFCFLIL. The Cytoplasmic portion of the chain corresponds to 175 to 179; sequence RYRYH. A helical transmembrane segment spans residues 180 to 200; it reads LFNYVGASIIVLTIAIVEFIL. Residues 201–208 lie on the Vacuolar side of the membrane; that stretch reads SFETQEEN. The helical transmembrane segment at 209-229 threads the bilayer; that stretch reads SIVFNLVLIASLIPMSFSNMT. The Cytoplasmic portion of the chain corresponds to 230–246; it reads REIVFKKYKINILRLNA. Residues 247–267 form a helical membrane-spanning segment; the sequence is VVSFFQIFTSCLMLPMYTLPF. Topologically, residues 268–316 are vacuolar; it reads LKQINLPFSEIGTNIKNGFRCLILGQNTIVENCGLGMAKMCDDCEGAWK. 2 disulfides stabilise this stretch: Cys-288/Cys-311 and Cys-300/Cys-308. The helical transmembrane segment at 317–337 threads the bilayer; sequence TFLAYSFFNICDNLITSFIID. The Cytoplasmic portion of the chain corresponds to 338-345; sequence KFSTMTYT. The chain crosses the membrane as a helical span at residues 346–366; the sequence is IVSCIQGPAIAIAYYFKFLAG. The Vacuolar portion of the chain corresponds to 367–376; that stretch reads DAVMKPRVLD. A helical membrane pass occupies residues 377–397; it reads FVTLFGYLFGSIIYRVGNIIL. Residues 398–424 lie on the Cytoplasmic side of the membrane; that stretch reads EKKKMMEAGNDDDSEGELTNAESIITQ.

Belongs to the CRT-like transporter family.

Its subcellular location is the vacuole membrane. Nutrient transporter. Involved in maintaining the osmotic homeostasis of the digestive vacuole. The protein is Putative chloroquine resistance transporter of Plasmodium knowlesi.